The chain runs to 208 residues: Fibroblast growth factor 10 (208 aa).

The N-terminal stretch at 1–37 (MWKWILTHCASAFPHLPGCCCCCFLLLFLVSSVPVTC) is a signal peptide. N-linked (GlcNAc...) asparagine glycosylation is found at N51 and N196.

This sequence belongs to the heparin-binding growth factors family. Interacts with FGFR1 and FGFR2. Interacts with FGFBP1.

It is found in the secreted. In terms of biological role, plays an important role in the regulation of embryonic development, cell proliferation and cell differentiation. Required for normal branching morphogenesis. May play a role in wound healing. This chain is Fibroblast growth factor 10 (FGF10), found in Homo sapiens (Human).